Consider the following 990-residue polypeptide: TonB-dependent receptor P26 (990 aa).

Positions 86 to 93 match the TonB box motif; the sequence is DEVVVIGY. Residues 97–213 enclose the TBDR plug domain; sequence RKSDLTGSVS…ANGVVLVTTK (117 aa). The region spanning 220 to 990 is the TBDR beta-barrel domain; it reads SSKPEVSANI…TITLGLNVTF (771 aa). A disordered region spans residues 878 to 902; sequence TPENPTSDIPRAGGDSVTGTPPNSA. A TonB C-terminal box motif is present at residues 974-990; sequence GSYPNPRTITLGLNVTF.

It belongs to the TonB-dependent receptor family.

The protein resides in the cell outer membrane. Functionally, tonB-dependent receptor probably involved in ulvan degradation. Ulvan is the main polysaccharide component of the Ulvales (green seaweed) cell wall. It is composed of disaccharide building blocks comprising 3-sulfated rhamnose (Rha3S) linked to D-glucuronic acid (GlcA), L-iduronic acid (IduA), or D-xylose (Xyl). The TonB-dependent receptor may mediate transport of ulvan oligosaccharides from the surface of the outer membrane to the periplasm for subsequent degradation. The polypeptide is TonB-dependent receptor P26 (Formosa agariphila (strain DSM 15362 / KCTC 12365 / LMG 23005 / KMM 3901 / M-2Alg 35-1)).